Reading from the N-terminus, the 446-residue chain is DNA repair protein RadA (446 aa).

The segment at 10–27 (CSNCGNTSPKWSGQCFDC) adopts a C4-type zinc-finger fold. ATP is bound at residue 91-98 (GDPGIGKS). The short motif at 250-254 (KNRFG) is the RadA KNRFG motif element. The interval 349–446 (EVYLSIAGGL…HLKDLKEIIR (98 aa)) is lon-protease-like.

The protein belongs to the RecA family. RadA subfamily.

Functionally, DNA-dependent ATPase involved in processing of recombination intermediates, plays a role in repairing DNA breaks. Stimulates the branch migration of RecA-mediated strand transfer reactions, allowing the 3' invading strand to extend heteroduplex DNA faster. Binds ssDNA in the presence of ADP but not other nucleotides, has ATPase activity that is stimulated by ssDNA and various branched DNA structures, but inhibited by SSB. Does not have RecA's homology-searching function. This chain is DNA repair protein RadA, found in Rickettsia felis (strain ATCC VR-1525 / URRWXCal2) (Rickettsia azadi).